Consider the following 408-residue polypeptide: Multidrug resistance protein MdtG (408 aa).

The next 11 helical transmembrane spans lie at Leu-16 to Phe-36, Ile-58 to Ala-78, Leu-92 to Ile-112, Ala-115 to Val-135, Thr-146 to Ala-166, Pro-173 to Ile-193, Leu-224 to Leu-244, Val-256 to Pro-276, Ile-290 to Thr-310, Phe-319 to Asn-339, and Ala-378 to Leu-398.

This sequence belongs to the major facilitator superfamily. DHA1 family. MdtG (TC 2.A.1.2.20) subfamily.

It localises to the cell inner membrane. Functionally, confers resistance to fosfomycin and deoxycholate. This chain is Multidrug resistance protein MdtG, found in Escherichia coli O7:K1 (strain IAI39 / ExPEC).